Reading from the N-terminus, the 252-residue chain is Trypsin iota (252 aa).

A signal peptide spans 1–19; it reads MAVYGIVATVLVLLLLGDA. The propeptide at 20–27 is activation peptide; sequence SDVEATGR. One can recognise a Peptidase S1 domain in the interval 28-250; it reads IIGGSDQLIR…LRPWIVKAAN (223 aa). C53 and C69 form a disulfide bridge. Catalysis depends on charge relay system residues H68 and D113. 2 disulfides stabilise this stretch: C175/C193 and C202/C226. S206 functions as the Charge relay system in the catalytic mechanism.

It belongs to the peptidase S1 family.

It localises to the secreted. The protein localises to the extracellular space. It carries out the reaction Preferential cleavage: Arg-|-Xaa, Lys-|-Xaa.. The sequence is that of Trypsin iota (iotaTry) from Drosophila melanogaster (Fruit fly).